Here is a 578-residue protein sequence, read N- to C-terminus: Arginine--tRNA ligase (578 aa).

A 'HIGH' region motif is present at residues 127–137; that stretch reads PNLAKEMHVGH.

This sequence belongs to the class-I aminoacyl-tRNA synthetase family. In terms of assembly, monomer.

The protein localises to the cytoplasm. It catalyses the reaction tRNA(Arg) + L-arginine + ATP = L-arginyl-tRNA(Arg) + AMP + diphosphate. The sequence is that of Arginine--tRNA ligase from Pseudomonas putida (strain ATCC 700007 / DSM 6899 / JCM 31910 / BCRC 17059 / LMG 24140 / F1).